Here is a 150-residue protein sequence, read N- to C-terminus: Large ribosomal subunit protein bL9 (150 aa).

This sequence belongs to the bacterial ribosomal protein bL9 family.

In terms of biological role, binds to the 23S rRNA. The sequence is that of Large ribosomal subunit protein bL9 from Burkholderia vietnamiensis (strain G4 / LMG 22486) (Burkholderia cepacia (strain R1808)).